The following is a 950-amino-acid chain: Bifunctional glutamine synthetase adenylyltransferase/adenylyl-removing enzyme (950 aa).

The segment at 1-440 is adenylyl removase; the sequence is MLPLPSELQI…VFDHLIGDDA (440 aa). The tract at residues 449 to 950 is adenylyl transferase; that stretch reads HGLYKSLWQD…KWLVAAPSDV (502 aa).

It belongs to the GlnE family. The cofactor is Mg(2+).

The enzyme catalyses [glutamine synthetase]-O(4)-(5'-adenylyl)-L-tyrosine + phosphate = [glutamine synthetase]-L-tyrosine + ADP. It catalyses the reaction [glutamine synthetase]-L-tyrosine + ATP = [glutamine synthetase]-O(4)-(5'-adenylyl)-L-tyrosine + diphosphate. Functionally, involved in the regulation of glutamine synthetase GlnA, a key enzyme in the process to assimilate ammonia. When cellular nitrogen levels are high, the C-terminal adenylyl transferase (AT) inactivates GlnA by covalent transfer of an adenylyl group from ATP to specific tyrosine residue of GlnA, thus reducing its activity. Conversely, when nitrogen levels are low, the N-terminal adenylyl removase (AR) activates GlnA by removing the adenylyl group by phosphorolysis, increasing its activity. The regulatory region of GlnE binds the signal transduction protein PII (GlnB) which indicates the nitrogen status of the cell. In Yersinia enterocolitica serotype O:8 / biotype 1B (strain NCTC 13174 / 8081), this protein is Bifunctional glutamine synthetase adenylyltransferase/adenylyl-removing enzyme.